Here is a 161-residue protein sequence, read N- to C-terminus: Lipoprotein signal peptidase (161 aa).

4 helical membrane-spanning segments follow: residues 11 to 31 (PLFW…KLWV), 44 to 64 (LWSG…FSAF), 66 to 86 (GGAG…IIFA), and 100 to 120 (GCIL…GHVI). Catalysis depends on residues Asp-121 and Asp-137. The chain crosses the membrane as a helical span at residues 135–155 (LADVSINIGIAALLWASFFPV).

This sequence belongs to the peptidase A8 family.

The protein localises to the cell inner membrane. It catalyses the reaction Release of signal peptides from bacterial membrane prolipoproteins. Hydrolyzes -Xaa-Yaa-Zaa-|-(S,diacylglyceryl)Cys-, in which Xaa is hydrophobic (preferably Leu), and Yaa (Ala or Ser) and Zaa (Gly or Ala) have small, neutral side chains.. Its pathway is protein modification; lipoprotein biosynthesis (signal peptide cleavage). Functionally, this protein specifically catalyzes the removal of signal peptides from prolipoproteins. The protein is Lipoprotein signal peptidase of Synechocystis sp. (strain ATCC 27184 / PCC 6803 / Kazusa).